Reading from the N-terminus, the 699-residue chain is Elongation factor G (699 aa).

In terms of domain architecture, tr-type G spans Glu-8–Ile-288. GTP is bound by residues Ala-17–Thr-24, Asp-86–His-90, and Asn-140–Asp-143.

It belongs to the TRAFAC class translation factor GTPase superfamily. Classic translation factor GTPase family. EF-G/EF-2 subfamily.

Its subcellular location is the cytoplasm. In terms of biological role, catalyzes the GTP-dependent ribosomal translocation step during translation elongation. During this step, the ribosome changes from the pre-translocational (PRE) to the post-translocational (POST) state as the newly formed A-site-bound peptidyl-tRNA and P-site-bound deacylated tRNA move to the P and E sites, respectively. Catalyzes the coordinated movement of the two tRNA molecules, the mRNA and conformational changes in the ribosome. In Sinorhizobium fredii (strain NBRC 101917 / NGR234), this protein is Elongation factor G.